Reading from the N-terminus, the 1726-residue chain is Probable serine/threonine-protein kinase roco4 (1726 aa).

LRR repeat units follow at residues 256–277 (KGKR…ITQM), 280–301 (HLVE…IQLL), 303–324 (SLRI…ICYL), and 326–347 (DLKI…VVQS). The region spanning 364-544 (KSETWNKVKL…KRLIHEAEKS (181 aa)) is the Roc domain. GTP is bound by residues 377–384 (GQEGVGKT), 428–432 (DFGGQ), and 487–490 (THSD). One can recognise a COR domain in the interval 591-787 (AINSQKERYI…RTYWRNGVLL (197 aa)). Residues 800-881 (SKQQQLQQQQ…STLNSQQLIN (82 aa)) show a composition bias toward low complexity. Residues 800–890 (SKQQQLQQQQ…NPSVSPLSST (91 aa)) are disordered. The region spanning 1026 to 1292 (IEYEKQIGKG…SYIVKELSEL (267 aa)) is the Protein kinase domain. Residues 1032–1040 (IGKGGFGLV) and Lys-1055 contribute to the ATP site. Residue Asp-1154 is the Proton acceptor of the active site. Polar residues predominate over residues 1319–1331 (ASTSSNADDGSQT). The segment at 1319–1385 (ASTSSNADDG…SSPSTSFINS (67 aa)) is disordered. Residues 1332–1348 (NNNNNNNNNNNNNNNNN) show a composition bias toward low complexity. Residues 1349–1364 (SGSSIALSPSRSFEQQ) show a composition bias toward polar residues. The segment covering 1365–1381 (TTTTTTTTTSPSSPSTS) has biased composition (low complexity). 6 WD repeats span residues 1422–1461 (SVHK…LINE), 1463–1502 (KCPH…IVQQ), 1506–1546 (PHKG…KKHS), 1589–1627 (KHST…ELQK), 1633–1670 (AHHE…KPFT), and 1674–1714 (HHKQ…EKKT).

This sequence belongs to the protein kinase superfamily. TKL Ser/Thr protein kinase family. ROCO subfamily.

The enzyme catalyses L-seryl-[protein] + ATP = O-phospho-L-seryl-[protein] + ADP + H(+). The catalysed reaction is L-threonyl-[protein] + ATP = O-phospho-L-threonyl-[protein] + ADP + H(+). The polypeptide is Probable serine/threonine-protein kinase roco4 (roco4) (Dictyostelium discoideum (Social amoeba)).